A 431-amino-acid chain; its full sequence is Cleavage stimulation factor subunit 1 (431 aa).

WD repeat units lie at residues 106 to 145, 171 to 210, 215 to 254, 260 to 301, 303 to 343, and 395 to 431; these read SHKG…AKSA, DHVD…AKRA, QEAE…CFVS, QHTD…TTFE, AHDG…TLVR, and GHNN…STTD.

In terms of assembly, homodimer. The CSTF complex is composed of CSTF1 (50 kDa subunit), CSTF2 (64 kDa subunit) and CSTF3 (77 kDa subunit). Interacts (via repeats WD) directly with CSTF3. Interacts (via repeat WD6) with BARD1. Interacts with ERCC6.

Its subcellular location is the nucleus. Its function is as follows. One of the multiple factors required for polyadenylation and 3'-end cleavage of mammalian pre-mRNAs. May be responsible for the interaction of CSTF with other factors to form a stable complex on the pre-mRNA. This Mus musculus (Mouse) protein is Cleavage stimulation factor subunit 1 (Cstf1).